The following is a 150-amino-acid chain: Endoribonuclease YbeY (150 aa).

Residues His102, His106, and His112 each coordinate Zn(2+).

Belongs to the endoribonuclease YbeY family. Requires Zn(2+) as cofactor.

It localises to the cytoplasm. Its function is as follows. Single strand-specific metallo-endoribonuclease involved in late-stage 70S ribosome quality control and in maturation of the 3' terminus of the 16S rRNA. This chain is Endoribonuclease YbeY, found in Thermotoga sp. (strain RQ2).